A 619-amino-acid polypeptide reads, in one-letter code: Pescadillo homolog (619 aa).

The disordered stretch occupies residues 303–324; it reads ADKDQKDQDTIEDAEEVTEPTV. Acidic residues predominate over residues 312–324; it reads TIEDAEEVTEPTV. The region spanning 353-452 is the BRCT domain; the sequence is PTSQLFSKFI…ELVSVGDYAP (100 aa). Residues 456-567 form a disordered region; the sequence is LPPHLSPWGD…STKAALTPEE (112 aa). Coiled-coil stretches lie at residues 472–560 and 588–619; these read NAKA…ASTK and MQYGIEKKTNRVDELTKKRKQLEKKKKQLKDV. The span at 480-522 shows a compositional bias: acidic residues; it reads EAEEEEEEEEEDEEEEEEEEEIEVADGDEDQDDEEEEEIEDED. The span at 523–539 shows a compositional bias: basic and acidic residues; it reads LKAQKELEMEVAGKKFS.

This sequence belongs to the pescadillo family. As to quaternary structure, component of the NOP7 complex, composed of ERB1, NOP7 and YTM1. The complex is held together by ERB1, which interacts with NOP7 via its N-terminal domain and with YTM1 via a high-affinity interaction between the seven-bladed beta-propeller domains of the 2 proteins. The NOP7 complex associates with the 66S pre-ribosome.

It localises to the nucleus. Its subcellular location is the nucleolus. It is found in the nucleoplasm. Functionally, component of the NOP7 complex, which is required for maturation of the 25S and 5.8S ribosomal RNAs and formation of the 60S ribosome. The protein is Pescadillo homolog of Lodderomyces elongisporus (strain ATCC 11503 / CBS 2605 / JCM 1781 / NBRC 1676 / NRRL YB-4239) (Yeast).